The primary structure comprises 449 residues: Anthocyanidin 3-O-glucosyltransferase 1 (449 aa).

Catalysis depends on H3, which acts as the Proton acceptor. An an anthocyanidin-binding site is contributed by H3. The active-site Charge relay is the D103. Residues T125, A325, Q327, H342, W345, N346, S347, and E350 each contribute to the UDP-alpha-D-glucose site. A365 serves as a coordination point for an anthocyanidin. The UDP-alpha-D-glucose site is built by E366 and Q367.

This sequence belongs to the UDP-glycosyltransferase family. As to expression, expressed in cotyledons and roots, but not in leaves.

The enzyme catalyses an anthocyanidin + UDP-alpha-D-glucose + H(+) = an anthocyanidin 3-O-beta-D-glucoside + UDP. It functions in the pathway pigment biosynthesis; anthocyanin biosynthesis. In the presence of other necessary color factors, this glycosylation reaction allows the accumulation of anthocyanin pigments. This chain is Anthocyanidin 3-O-glucosyltransferase 1 (GT1), found in Manihot esculenta (Cassava).